We begin with the raw amino-acid sequence, 200 residues long: Ras-related protein Rab-7b (200 aa).

GTP-binding positions include 15–22 (GALGVGKT), 34–40 (YEDYQTT), 63–67 (DTGGQ), 124–127 (NKID), and 154–155 (AK). Short sequence motifs (switch) lie at residues 28-41 (YVHK…QTTL) and 67-82 (QERF…KGSD). The residue at position 186 (serine 186) is a Phosphoserine. S-geranylgeranyl cysteine attachment occurs at residues cysteine 199 and cysteine 200.

The protein belongs to the small GTPase superfamily. Rab family.

It is found in the late endosome. The protein resides in the lysosome. Its subcellular location is the golgi apparatus. The protein localises to the trans-Golgi network. It localises to the cytoplasmic vesicle. It is found in the phagosome. The protein resides in the phagosome membrane. Functionally, controls vesicular trafficking from endosomes to the trans-Golgi network (TGN). Acts as a negative regulator of TLR9 signaling and can suppress TLR9-triggered TNFA, IL6, and IFNB production in macrophages by promoting TLR9 lysosomal degradation. Also negatively regulates TLR4 signaling in macrophages by promoting lysosomal degradation of TLR4. Promotes megakaryocytic differentiation by increasing NF-kappa-B-dependent IL6 production and subsequently enhancing the association of STAT3 with GATA1. Not involved in the regulation of the EGF- and EGFR degradation pathway. This is Ras-related protein Rab-7b (RAB7B) from Bos taurus (Bovine).